Reading from the N-terminus, the 74-residue chain is MARVTVEDCLENVDNRFELVMVASKRARQLATGGEDAKVPLEGDKVTVVALREIAENLINAKNVDQQKRPLHEF.

The protein belongs to the RNA polymerase subunit omega family. In terms of assembly, the RNAP catalytic core consists of 2 alpha, 1 beta, 1 beta' and 1 omega subunit. When a sigma factor is associated with the core the holoenzyme is formed, which can initiate transcription.

It carries out the reaction RNA(n) + a ribonucleoside 5'-triphosphate = RNA(n+1) + diphosphate. Functionally, promotes RNA polymerase assembly. Latches the N- and C-terminal regions of the beta' subunit thereby facilitating its interaction with the beta and alpha subunits. The protein is DNA-directed RNA polymerase subunit omega of Marinomonas sp. (strain MWYL1).